The primary structure comprises 373 residues: Chaperone protein DnaJ (373 aa).

The 65-residue stretch at 5–69 (DYYEVLGVNK…NKRVNYDQFG (65 aa)) folds into the J domain. The CR-type zinc-finger motif lies at 130 to 212 (GTKKEISIKK…CKGKGTENKT (83 aa)). Positions 143, 146, 160, 163, 186, 189, 200, and 203 each coordinate Zn(2+). CXXCXGXG motif repeat units follow at residues 143–150 (CHTCNGDG), 160–167 (CSYCNGAG), 186–193 (CPKCEGSG), and 200–207 (CPTCKGKG).

The protein belongs to the DnaJ family. Homodimer. Zn(2+) serves as cofactor.

It is found in the cytoplasm. In terms of biological role, participates actively in the response to hyperosmotic and heat shock by preventing the aggregation of stress-denatured proteins and by disaggregating proteins, also in an autonomous, DnaK-independent fashion. Unfolded proteins bind initially to DnaJ; upon interaction with the DnaJ-bound protein, DnaK hydrolyzes its bound ATP, resulting in the formation of a stable complex. GrpE releases ADP from DnaK; ATP binding to DnaK triggers the release of the substrate protein, thus completing the reaction cycle. Several rounds of ATP-dependent interactions between DnaJ, DnaK and GrpE are required for fully efficient folding. Also involved, together with DnaK and GrpE, in the DNA replication of plasmids through activation of initiation proteins. This chain is Chaperone protein DnaJ, found in Staphylococcus epidermidis (strain ATCC 35984 / DSM 28319 / BCRC 17069 / CCUG 31568 / BM 3577 / RP62A).